A 121-amino-acid chain; its full sequence is Small ribosomal subunit protein uS13 (121 aa).

The tract at residues 93-121 (RKGLPVRGQKTKTNARTRKGKRKTVGAKS) is disordered.

This sequence belongs to the universal ribosomal protein uS13 family. As to quaternary structure, part of the 30S ribosomal subunit. Forms a loose heterodimer with protein S19. Forms two bridges to the 50S subunit in the 70S ribosome.

Its function is as follows. Located at the top of the head of the 30S subunit, it contacts several helices of the 16S rRNA. In the 70S ribosome it contacts the 23S rRNA (bridge B1a) and protein L5 of the 50S subunit (bridge B1b), connecting the 2 subunits; these bridges are implicated in subunit movement. Contacts the tRNAs in the A and P-sites. In Campylobacter lari (strain RM2100 / D67 / ATCC BAA-1060), this protein is Small ribosomal subunit protein uS13.